The primary structure comprises 249 residues: tRNA pseudouridine synthase A (249 aa).

Aspartate 53 serves as the catalytic Nucleophile. Tyrosine 111 is a binding site for substrate.

The protein belongs to the tRNA pseudouridine synthase TruA family. As to quaternary structure, homodimer.

The enzyme catalyses uridine(38/39/40) in tRNA = pseudouridine(38/39/40) in tRNA. Functionally, formation of pseudouridine at positions 38, 39 and 40 in the anticodon stem and loop of transfer RNAs. The protein is tRNA pseudouridine synthase A of Streptococcus pyogenes serotype M1.